The sequence spans 2475 residues: Polyprotein pp220 (2475 aa).

Glycine 2 carries N-myristoyl glycine; by host lipidation. Residues 2185-2212 (KNQLIADLTTIREQLVSMRREVENMIQT) are a coiled coil.

This sequence belongs to the asfivirus polyprotein pp220 family. The polyprotein is not glycosylated. Post-translationally, specific enzymatic cleavages in vivo by the viral pS273R protease yield mature proteins.

The protein resides in the host cytoplasm. It localises to the host perinuclear region. The protein localises to the virion. Its subcellular location is the host nucleus. Essential for the core assembly. Its myristoyl moiety may function as a membrane-anchoring signal to bind the developing core shell to the inner viral envelope. Its function is as follows. The structural protein p34 is a component of the virus core shell. Functionally, the structural protein p14 is a component of the virus core shell. In terms of biological role, the structural protein p37 is a component of the virus core shell. The structural protein p150 is a component of the virus core shell. This chain is Polyprotein pp220, found in Ornithodoros (relapsing fever ticks).